The sequence spans 99 residues: Small ribosomal subunit protein bS18 (99 aa).

A compositionally biased stretch (basic and acidic residues) spans 1–25; it reads MAEDHPSVDLDTHLSSPRESEESAP. Positions 1–28 are disordered; that stretch reads MAEDHPSVDLDTHLSSPRESEESAPKKN.

The protein belongs to the bacterial ribosomal protein bS18 family. Part of the 30S ribosomal subunit. Forms a tight heterodimer with protein bS6.

Its function is as follows. Binds as a heterodimer with protein bS6 to the central domain of the 16S rRNA, where it helps stabilize the platform of the 30S subunit. The polypeptide is Small ribosomal subunit protein bS18 (Treponema pallidum (strain Nichols)).